The sequence spans 260 residues: Adenosylcobinamide-GDP ribazoletransferase (260 aa).

6 helical membrane passes run 7–27, 45–65, 117–137, 145–165, 187–207, and 210–230; these read WYFL…TRLP, LMGL…HWLG, AYGV…LASF, WALI…IALY, LLLG…ALAI, and WLIL…GRWF.

This sequence belongs to the CobS family. Mg(2+) is required as a cofactor.

Its subcellular location is the cell inner membrane. It carries out the reaction alpha-ribazole + adenosylcob(III)inamide-GDP = adenosylcob(III)alamin + GMP + H(+). It catalyses the reaction alpha-ribazole 5'-phosphate + adenosylcob(III)inamide-GDP = adenosylcob(III)alamin 5'-phosphate + GMP + H(+). It participates in cofactor biosynthesis; adenosylcobalamin biosynthesis; adenosylcobalamin from cob(II)yrinate a,c-diamide: step 7/7. In terms of biological role, joins adenosylcobinamide-GDP and alpha-ribazole to generate adenosylcobalamin (Ado-cobalamin). Also synthesizes adenosylcobalamin 5'-phosphate from adenosylcobinamide-GDP and alpha-ribazole 5'-phosphate. This is Adenosylcobinamide-GDP ribazoletransferase from Synechocystis sp. (strain ATCC 27184 / PCC 6803 / Kazusa).